The sequence spans 310 residues: ADP-L-glycero-D-manno-heptose-6-epimerase (310 aa).

Residues 10–11 (FI), 31–32 (DN), K38, K53, 75–79 (EGACS), and N92 each bind NADP(+). Y140 serves as the catalytic Proton acceptor. K144 serves as a coordination point for NADP(+). N169 is a binding site for substrate. NADP(+)-binding residues include V170 and K178. K178 serves as the catalytic Proton acceptor. Substrate contacts are provided by residues S180, H187, 201–204 (FEGS), R209, and Y272.

The protein belongs to the NAD(P)-dependent epimerase/dehydratase family. HldD subfamily. Homopentamer. NADP(+) is required as a cofactor.

It catalyses the reaction ADP-D-glycero-beta-D-manno-heptose = ADP-L-glycero-beta-D-manno-heptose. It functions in the pathway nucleotide-sugar biosynthesis; ADP-L-glycero-beta-D-manno-heptose biosynthesis; ADP-L-glycero-beta-D-manno-heptose from D-glycero-beta-D-manno-heptose 7-phosphate: step 4/4. Catalyzes the interconversion between ADP-D-glycero-beta-D-manno-heptose and ADP-L-glycero-beta-D-manno-heptose via an epimerization at carbon 6 of the heptose. The chain is ADP-L-glycero-D-manno-heptose-6-epimerase from Salmonella dublin (strain CT_02021853).